A 307-amino-acid polypeptide reads, in one-letter code: Oxygen-dependent coproporphyrinogen-III oxidase (307 aa).

Residue Ser-99 participates in substrate binding. A divalent metal cation contacts are provided by His-103 and His-113. His-113 functions as the Proton donor in the catalytic mechanism. Asn-115–Arg-117 lines the substrate pocket. Residues His-152 and His-182 each contribute to the a divalent metal cation site. Positions Tyr-247–Arg-282 are important for dimerization. Residue Gly-265–Arg-267 participates in substrate binding.

This sequence belongs to the aerobic coproporphyrinogen-III oxidase family. Homodimer. Requires a divalent metal cation as cofactor.

The protein resides in the cytoplasm. The enzyme catalyses coproporphyrinogen III + O2 + 2 H(+) = protoporphyrinogen IX + 2 CO2 + 2 H2O. Its pathway is porphyrin-containing compound metabolism; protoporphyrin-IX biosynthesis; protoporphyrinogen-IX from coproporphyrinogen-III (O2 route): step 1/1. Functionally, involved in the heme biosynthesis. Catalyzes the aerobic oxidative decarboxylation of propionate groups of rings A and B of coproporphyrinogen-III to yield the vinyl groups in protoporphyrinogen-IX. The chain is Oxygen-dependent coproporphyrinogen-III oxidase from Burkholderia lata (strain ATCC 17760 / DSM 23089 / LMG 22485 / NCIMB 9086 / R18194 / 383).